The primary structure comprises 88 residues: Large ribosomal subunit protein bL27 (88 aa).

Positions 1–13 (MATKKSGGSSSNG) are enriched in low complexity. The disordered stretch occupies residues 1–24 (MATKKSGGSSSNGRDSRGRRLGVK).

Belongs to the bacterial ribosomal protein bL27 family.

This chain is Large ribosomal subunit protein bL27, found in Ehrlichia ruminantium (strain Gardel).